Reading from the N-terminus, the 440-residue chain is tRNA(Ile)-lysidine synthase (440 aa).

29 to 34 is a binding site for ATP; it reads SGGLDS.

This sequence belongs to the tRNA(Ile)-lysidine synthase family.

It localises to the cytoplasm. It carries out the reaction cytidine(34) in tRNA(Ile2) + L-lysine + ATP = lysidine(34) in tRNA(Ile2) + AMP + diphosphate + H(+). Functionally, ligates lysine onto the cytidine present at position 34 of the AUA codon-specific tRNA(Ile) that contains the anticodon CAU, in an ATP-dependent manner. Cytidine is converted to lysidine, thus changing the amino acid specificity of the tRNA from methionine to isoleucine. This chain is tRNA(Ile)-lysidine synthase, found in Pectobacterium atrosepticum (strain SCRI 1043 / ATCC BAA-672) (Erwinia carotovora subsp. atroseptica).